The primary structure comprises 239 residues: Ribosomal RNA small subunit methyltransferase G (239 aa).

Residues Gly105, Leu110, 156-157 (VE), and Arg169 contribute to the S-adenosyl-L-methionine site.

This sequence belongs to the methyltransferase superfamily. RNA methyltransferase RsmG family.

Its subcellular location is the cytoplasm. It catalyses the reaction guanosine(527) in 16S rRNA + S-adenosyl-L-methionine = N(7)-methylguanosine(527) in 16S rRNA + S-adenosyl-L-homocysteine. Functionally, specifically methylates the N7 position of guanine in position 527 of 16S rRNA. This is Ribosomal RNA small subunit methyltransferase G from Verminephrobacter eiseniae (strain EF01-2).